The primary structure comprises 470 residues: Cysteine--tRNA ligase (470 aa).

Residue Cys-28 coordinates Zn(2+). The short motif at 30 to 40 (PTVYNYIHIGN) is the 'HIGH' region element. The Zn(2+) site is built by Cys-212, His-237, and Glu-241. Positions 271 to 275 (KMSKS) match the 'KMSKS' region motif. Lys-274 serves as a coordination point for ATP.

It belongs to the class-I aminoacyl-tRNA synthetase family. Monomer. Zn(2+) serves as cofactor.

It localises to the cytoplasm. It catalyses the reaction tRNA(Cys) + L-cysteine + ATP = L-cysteinyl-tRNA(Cys) + AMP + diphosphate. This Pediococcus pentosaceus (strain ATCC 25745 / CCUG 21536 / LMG 10740 / 183-1w) protein is Cysteine--tRNA ligase.